The primary structure comprises 459 residues: GTPase Der (459 aa).

EngA-type G domains follow at residues 3 to 167 (FTFA…PEPE) and 188 to 363 (IRVA…AVWN). GTP-binding positions include 9-16 (GRPNVGKS), 56-60 (DTAGL), 119-122 (NKSE), 194-201 (GRPNAGKS), 241-245 (DTAGL), and 306-309 (NKWD). A KH-like domain is found at 364-448 (TRVSTAALNR…PVRITLREKA (85 aa)).

It belongs to the TRAFAC class TrmE-Era-EngA-EngB-Septin-like GTPase superfamily. EngA (Der) GTPase family. Associates with the 50S ribosomal subunit.

Functionally, GTPase that plays an essential role in the late steps of ribosome biogenesis. This Rhodopseudomonas palustris (strain HaA2) protein is GTPase Der.